The following is a 437-amino-acid chain: UDP-N-acetylmuramoylalanine--D-glutamate ligase (437 aa).

Gly112 to Thr118 is a binding site for ATP.

Belongs to the MurCDEF family.

Its subcellular location is the cytoplasm. It catalyses the reaction UDP-N-acetyl-alpha-D-muramoyl-L-alanine + D-glutamate + ATP = UDP-N-acetyl-alpha-D-muramoyl-L-alanyl-D-glutamate + ADP + phosphate + H(+). It functions in the pathway cell wall biogenesis; peptidoglycan biosynthesis. In terms of biological role, cell wall formation. Catalyzes the addition of glutamate to the nucleotide precursor UDP-N-acetylmuramoyl-L-alanine (UMA). The chain is UDP-N-acetylmuramoylalanine--D-glutamate ligase from Haemophilus influenzae (strain PittEE).